A 124-amino-acid chain; its full sequence is Ribonuclease pancreatic (124 aa).

Residues 1–13 (KETAAEKFQRQHM) are compositionally biased toward basic and acidic residues. The tract at residues 1–21 (KETAAEKFQRQHMDTSSSLSN) is disordered. Substrate-binding residues include Lys7 and Arg10. His12 serves as the catalytic Proton acceptor. 4 disulfide bridges follow: Cys26-Cys84, Cys40-Cys95, Cys58-Cys110, and Cys65-Cys72. N-linked (GlcNAc...) asparagine glycosylation is present at Asn34. Substrate contacts are provided by residues 41–45 (KPVNT), Lys66, and Arg85. The active-site Proton donor is the His119.

Belongs to the pancreatic ribonuclease family. In terms of assembly, monomer. Interacts with and forms tight 1:1 complexes with RNH1. Dimerization of two such complexes may occur. Interaction with RNH1 inhibits this protein. As to expression, pancreas.

It is found in the secreted. The enzyme catalyses an [RNA] containing cytidine + H2O = an [RNA]-3'-cytidine-3'-phosphate + a 5'-hydroxy-ribonucleotide-3'-[RNA].. The catalysed reaction is an [RNA] containing uridine + H2O = an [RNA]-3'-uridine-3'-phosphate + a 5'-hydroxy-ribonucleotide-3'-[RNA].. In terms of biological role, endonuclease that catalyzes the cleavage of RNA on the 3' side of pyrimidine nucleotides. Acts on single-stranded and double-stranded RNA. The polypeptide is Ribonuclease pancreatic (RNASE1) (Hippopotamus amphibius (Hippopotamus)).